Consider the following 196-residue polypeptide: Probable malonic semialdehyde reductase RutE (196 aa).

This sequence belongs to the nitroreductase family. HadB/RutE subfamily. FMN serves as cofactor.

It carries out the reaction 3-hydroxypropanoate + NADP(+) = 3-oxopropanoate + NADPH + H(+). Functionally, may reduce toxic product malonic semialdehyde to 3-hydroxypropionic acid, which is excreted. The polypeptide is Probable malonic semialdehyde reductase RutE (Escherichia coli O139:H28 (strain E24377A / ETEC)).